The primary structure comprises 448 residues: Glutamate--tRNA ligase 2 (448 aa).

The short motif at 9–19 (PSPTGKLHIGN) is the 'HIGH' region element. A 'KMSKS' region motif is present at residues 240 to 244 (KISKR). Lys-243 contacts ATP.

The protein belongs to the class-I aminoacyl-tRNA synthetase family. Glutamate--tRNA ligase type 1 subfamily. As to quaternary structure, monomer.

The protein localises to the cytoplasm. The catalysed reaction is tRNA(Glu) + L-glutamate + ATP = L-glutamyl-tRNA(Glu) + AMP + diphosphate. Catalyzes the attachment of glutamate to tRNA(Glu) in a two-step reaction: glutamate is first activated by ATP to form Glu-AMP and then transferred to the acceptor end of tRNA(Glu). The sequence is that of Glutamate--tRNA ligase 2 from Orientia tsutsugamushi (strain Boryong) (Rickettsia tsutsugamushi).